An 838-amino-acid polypeptide reads, in one-letter code: Probable beta-glucosidase K (838 aa).

N-linked (GlcNAc...) asparagine glycosylation occurs at asparagine 19. Aspartate 232 is an active-site residue. N-linked (GlcNAc...) asparagine glycans are attached at residues asparagine 324 and asparagine 489. A PA14 domain is found at 405–564 (EGQPGLRMRF…DPELAIARAV (160 aa)).

This sequence belongs to the glycosyl hydrolase 3 family.

It is found in the secreted. The enzyme catalyses Hydrolysis of terminal, non-reducing beta-D-glucosyl residues with release of beta-D-glucose.. Its pathway is glycan metabolism; cellulose degradation. Its function is as follows. Beta-glucosidases are one of a number of cellulolytic enzymes involved in the degradation of cellulosic biomass. Catalyzes the last step releasing glucose from the inhibitory cellobiose. This Emericella nidulans (strain FGSC A4 / ATCC 38163 / CBS 112.46 / NRRL 194 / M139) (Aspergillus nidulans) protein is Probable beta-glucosidase K (bglK).